We begin with the raw amino-acid sequence, 166 residues long: Small ribosomal subunit protein uS5 (166 aa).

Residues 11 to 74 enclose the S5 DRBM domain; that stretch reads LEDRVVAINR…DAARKNLIEV (64 aa).

Belongs to the universal ribosomal protein uS5 family. Part of the 30S ribosomal subunit. Contacts proteins S4 and S8.

Its function is as follows. With S4 and S12 plays an important role in translational accuracy. Located at the back of the 30S subunit body where it stabilizes the conformation of the head with respect to the body. This chain is Small ribosomal subunit protein uS5, found in Ligilactobacillus salivarius (strain UCC118) (Lactobacillus salivarius).